A 277-amino-acid polypeptide reads, in one-letter code: uncharacterized protein (277 aa).

A signal peptide spans Met1 to Ala25. Residue Cys26 is the site of N-palmitoyl cysteine attachment. Cys26 carries the S-diacylglycerol cysteine lipid modification.

Belongs to the MG439/MG440 family.

It is found in the cell membrane. This is an uncharacterized protein from Mycoplasma pneumoniae (strain ATCC 29342 / M129 / Subtype 1) (Mycoplasmoides pneumoniae).